Reading from the N-terminus, the 768-residue chain is 5-methyltetrahydropteroyltriglutamate--homocysteine methyltransferase (768 aa).

Residues 17–20 and Lys117 each bind 5-methyltetrahydropteroyltri-L-glutamate; that span reads RELK. L-homocysteine is bound by residues 442–444 and Glu495; that span reads IGS. L-methionine contacts are provided by residues 442-444 and Glu495; that span reads IGS. 5-methyltetrahydropteroyltri-L-glutamate-binding positions include 526-527 and Trp572; that span reads RC. L-homocysteine is bound at residue Asp610. Asp610 contacts L-methionine. Glu616 serves as a coordination point for 5-methyltetrahydropteroyltri-L-glutamate. His653, Cys655, and Glu677 together coordinate Zn(2+). His706 (proton donor) is an active-site residue. Cys738 lines the Zn(2+) pocket.

This sequence belongs to the vitamin-B12 independent methionine synthase family. It depends on Zn(2+) as a cofactor.

It carries out the reaction 5-methyltetrahydropteroyltri-L-glutamate + L-homocysteine = tetrahydropteroyltri-L-glutamate + L-methionine. It functions in the pathway amino-acid biosynthesis; L-methionine biosynthesis via de novo pathway; L-methionine from L-homocysteine (MetE route): step 1/1. Functionally, catalyzes the transfer of a methyl group from 5-methyltetrahydrofolate to homocysteine resulting in methionine formation. The polypeptide is 5-methyltetrahydropteroyltriglutamate--homocysteine methyltransferase (Bifidobacterium adolescentis (strain ATCC 15703 / DSM 20083 / NCTC 11814 / E194a)).